The sequence spans 611 residues: UvrABC system protein C (611 aa).

The GIY-YIG domain maps to 6-84 (NNPGVYRMFN…IKRSRPRFNV (79 aa)). Positions 194–229 (QSVKDHLAAAMQAASADLDFEHAAVYRDRLAALSHV) constitute a UVR domain.

It belongs to the UvrC family. Interacts with UvrB in an incision complex.

The protein localises to the cytoplasm. Its function is as follows. The UvrABC repair system catalyzes the recognition and processing of DNA lesions. UvrC both incises the 5' and 3' sides of the lesion. The N-terminal half is responsible for the 3' incision and the C-terminal half is responsible for the 5' incision. In Brucella suis biovar 1 (strain 1330), this protein is UvrABC system protein C.